We begin with the raw amino-acid sequence, 1114 residues long: Proto-oncogene tyrosine-protein kinase receptor Ret (1114 aa).

The signal sequence occupies residues 1-28 (MAKATSGAAGLRLLLLLLLPLLGKVALG). The cadherin-like region 1 (CLD1) stretch occupies residues 29–153 (LYFSRDAYWE…RVYFSFFNTS (125 aa)). The Extracellular segment spans residues 29–635 (LYFSRDAYWE…QDPLCDELCR (607 aa)). Asparagine 98 carries an N-linked (GlcNAc...) asparagine glycan. Residues cysteine 137 and cysteine 142 are joined by a disulfide bond. The N-linked (GlcNAc...) asparagine glycan is linked to asparagine 151. 2 cysteine pairs are disulfide-bonded: cysteine 157–cysteine 197 and cysteine 166–cysteine 243. The Cadherin domain occupies 168–272 (PETRPSFRIR…YDEDDSAPTF (105 aa)). Ca(2+) contacts are provided by glutamate 178 and asparagine 179. N-linked (GlcNAc...) asparagine glycosylation is present at asparagine 199. Aspartate 230, glutamate 232, aspartate 264, glutamate 265, aspartate 266, aspartate 267, serine 268, aspartate 300, and aspartate 302 together coordinate Ca(2+). The segment at 265-379 (EDDSAPTFPA…MQLAVLVNDS (115 aa)) is cadherin-like region 3 (CLD3). 5 N-linked (GlcNAc...) asparagine glycosylation sites follow: asparagine 336, asparagine 343, asparagine 361, asparagine 367, and asparagine 377. Aspartate 378 lines the Ca(2+) pocket. An N-linked (GlcNAc...) asparagine glycan is attached at asparagine 394. The segment at 405–506 (PSTYSLSVSR…QAQLLVTVEG (102 aa)) is cadherin-like region 4 (CLD4). A disulfide bridge links cysteine 426 with cysteine 430. N-linked (GlcNAc...) asparagine glycans are attached at residues asparagine 448 and asparagine 468. Disulfide bonds link cysteine 449–cysteine 478, cysteine 515–cysteine 531, cysteine 519–cysteine 541, and cysteine 528–cysteine 558. Asparagine 554 carries an N-linked (GlcNAc...) asparagine glycan. Ca(2+) is bound by residues threonine 564, cysteine 565, aspartate 567, histidine 569, glutamate 574, and aspartate 584. 5 disulfides stabilise this stretch: cysteine 565-cysteine 581, cysteine 570-cysteine 585, cysteine 609-cysteine 620, cysteine 611-cysteine 618, and cysteine 630-cysteine 634. A helical membrane pass occupies residues 636 to 657 (TVIAAAVLFSFIVSVLLSAFCI). The Cytoplasmic portion of the chain corresponds to 658-1114 (HCYHKFAHKP…AAKLMDTFDS (457 aa)). Tyrosine 687 is subject to Phosphotyrosine; by autocatalysis. Serine 688 is a glycosylation site (O-linked (GlcNAc) serine). Serine 696 carries the phosphoserine modification. A Protein kinase domain is found at 724-1016 (LVLGKTLGEG…KMMVKRRDYL (293 aa)). ATP-binding positions include 730-738 (LGEGEFGKV) and lysine 758. Semaxanib is bound at residue 805–807 (EYA). Tyrosine 806, tyrosine 809, and tyrosine 826 each carry phosphotyrosine; by autocatalysis. The active-site Proton acceptor is aspartate 874. Phosphotyrosine; by autocatalysis is present on residues tyrosine 900, tyrosine 905, tyrosine 981, tyrosine 1015, tyrosine 1029, tyrosine 1062, tyrosine 1090, and tyrosine 1096.

It belongs to the protein kinase superfamily. Tyr protein kinase family. In terms of assembly, phosphorylated form interacts with the PBT domain of DOK2, DOK4 and DOK5. The phosphorylated form interacts with PLCG1 and GRB7. Interacts (not phosphorylated) with PTK2/FAK1 (via FERM domain). Extracellular cell-membrane anchored RET cadherin fragments form complex in neurons with reduced trophic status, preferentially at the contact sites between somas. Interacts with AIP in the pituitary gland; this interaction prevents the formation of the AIP-survivin complex. Interacts (inactive) with CBLC and CD2AP; dissociates upon activation by GDNF which increases CBLC:CD2AP interaction. The cofactor is Ca(2+). Autophosphorylated on C-terminal tyrosine residues upon ligand stimulation. In terms of processing, proteolytically cleaved by caspase-3. The soluble RET kinase fragment is able to induce cell death. The extracellular cell-membrane anchored RET cadherin fragment accelerates cell adhesion in sympathetic neurons.

It localises to the cell membrane. The protein localises to the endosome membrane. It catalyses the reaction L-tyrosyl-[protein] + ATP = O-phospho-L-tyrosyl-[protein] + ADP + H(+). With respect to regulation, repressed by 4-(3-hydroxyanilino)-quinolines derivatives, indolin-2-one-derivatives, 2-(alkylsulfanyl)-4-(3-thienyl) nicotinonitrile analogs, 3- and 4-substituted beta-carbolin-1-ones, vandetanib, motesanib, sorafenib (BAY 43-9006), cabozantinib (XL184), lenvatinib, sunitinib, nintedanib, and withaferin A (WA). Inactivation by sorafenib both reduces kinase activity and promotes lysosomal degradation. Receptor tyrosine-protein kinase involved in numerous cellular mechanisms including cell proliferation, neuronal navigation, cell migration, and cell differentiation in response to glia cell line-derived growth family factors (GDNF, NRTN, ARTN, PSPN and GDF15). In contrast to most receptor tyrosine kinases, RET requires not only its cognate ligands but also coreceptors, for activation. GDNF ligands (GDNF, NRTN, ARTN, PSPN and GDF15) first bind their corresponding GDNFR coreceptors (GFRA1, GFRA2, GFRA3, GFRA4 and GFRAL, respectively), triggering RET autophosphorylation and activation, leading to activation of downstream signaling pathways, including the MAPK- and AKT-signaling pathways. Acts as a dependence receptor via the GDNF-GFRA1 signaling: in the presence of the ligand GDNF in somatotrophs within pituitary, promotes survival and down regulates growth hormone (GH) production, but triggers apoptosis in absence of GDNF. Required for the molecular mechanisms orchestration during intestine organogenesis via the ARTN-GFRA3 signaling: involved in the development of enteric nervous system and renal organogenesis during embryonic life, and promotes the formation of Peyer's patch-like structures, a major component of the gut-associated lymphoid tissue. Mediates, through interaction with GDF15-receptor GFRAL, GDF15-induced cell-signaling in the brainstem which triggers an aversive response, characterized by nausea, vomiting, and/or loss of appetite in response to various stresses. Modulates cell adhesion via its cleavage by caspase in sympathetic neurons and mediates cell migration in an integrin (e.g. ITGB1 and ITGB3)-dependent manner. Also active in the absence of ligand, triggering apoptosis through a mechanism that requires receptor intracellular caspase cleavage. Triggers the differentiation of rapidly adapting (RA) mechanoreceptors. Involved in the development of the neural crest. Regulates nociceptor survival and size. Phosphorylates PTK2/FAK1. Functionally, isoform 1 in complex with GFRAL induces higher activation of MAPK-signaling pathway than isoform 2 in complex with GFRAL. The protein is Proto-oncogene tyrosine-protein kinase receptor Ret of Homo sapiens (Human).